A 240-amino-acid polypeptide reads, in one-letter code: Uridylate kinase (240 aa).

12–15 serves as a coordination point for ATP; the sequence is KISG. An involved in allosteric activation by GTP region spans residues 20-25; the sequence is GNQGFG. Residue G54 coordinates UMP. Residues G55 and R59 each coordinate ATP. Residues D74 and 135 to 142 contribute to the UMP site; that span reads TGNPYFST. Positions 168 and 171 each coordinate ATP.

This sequence belongs to the UMP kinase family. Homohexamer.

It localises to the cytoplasm. It catalyses the reaction UMP + ATP = UDP + ADP. The protein operates within pyrimidine metabolism; CTP biosynthesis via de novo pathway; UDP from UMP (UMPK route): step 1/1. Allosterically activated by GTP. Inhibited by UTP. Its function is as follows. Catalyzes the reversible phosphorylation of UMP to UDP. This is Uridylate kinase from Moorella thermoacetica (strain ATCC 39073 / JCM 9320).